We begin with the raw amino-acid sequence, 225 residues long: PKHD-type hydroxylase YbiX (225 aa).

A Fe2OG dioxygenase domain is found at 78-177 (TLSTPLFNRY…RVASFMWIQS (100 aa)). Fe cation is bound by residues H96, D98, and H158. R168 provides a ligand contact to 2-oxoglutarate.

The cofactor is Fe(2+). It depends on L-ascorbate as a cofactor.

This is PKHD-type hydroxylase YbiX from Escherichia fergusonii (strain ATCC 35469 / DSM 13698 / CCUG 18766 / IAM 14443 / JCM 21226 / LMG 7866 / NBRC 102419 / NCTC 12128 / CDC 0568-73).